A 206-amino-acid polypeptide reads, in one-letter code: Protein-methionine-sulfoxide reductase heme-binding subunit MsrQ (206 aa).

6 helical membrane-spanning segments follow: residues 14–34, 45–65, 82–102, 118–138, 149–169, and 179–199; these read IKPL…WLGA, FLTR…LAIT, MCGL…VWWD, PFIT…ATST, WQTL…HFWW, and QPLL…AAWW.

This sequence belongs to the MsrQ family. In terms of assembly, heterodimer of a catalytic subunit (MsrP) and a heme-binding subunit (MsrQ). It depends on FMN as a cofactor. Requires heme b as cofactor.

The protein resides in the cell inner membrane. In terms of biological role, part of the MsrPQ system that repairs oxidized periplasmic proteins containing methionine sulfoxide residues (Met-O), using respiratory chain electrons. Thus protects these proteins from oxidative-stress damage caused by reactive species of oxygen and chlorine generated by the host defense mechanisms. MsrPQ is essential for the maintenance of envelope integrity under bleach stress, rescuing a wide series of structurally unrelated periplasmic proteins from methionine oxidation. MsrQ provides electrons for reduction to the reductase catalytic subunit MsrP, using the quinone pool of the respiratory chain. This Bordetella pertussis (strain Tohama I / ATCC BAA-589 / NCTC 13251) protein is Protein-methionine-sulfoxide reductase heme-binding subunit MsrQ.